We begin with the raw amino-acid sequence, 328 residues long: D-cysteine desulfhydrase (328 aa).

Position 51 is an N6-(pyridoxal phosphate)lysine (K51).

This sequence belongs to the ACC deaminase/D-cysteine desulfhydrase family. Homodimer. Pyridoxal 5'-phosphate serves as cofactor.

It catalyses the reaction D-cysteine + H2O = hydrogen sulfide + pyruvate + NH4(+) + H(+). In terms of biological role, catalyzes the alpha,beta-elimination reaction of D-cysteine and of several D-cysteine derivatives. It could be a defense mechanism against D-cysteine. The chain is D-cysteine desulfhydrase from Salmonella paratyphi B (strain ATCC BAA-1250 / SPB7).